A 292-amino-acid polypeptide reads, in one-letter code: Lipoyl synthase (292 aa).

Positions 38, 43, 49, 64, 68, 71, and 277 each coordinate [4Fe-4S] cluster. Positions 50 to 266 (WSKGTATFLL…REIALDAGFR (217 aa)) constitute a Radical SAM core domain.

The protein belongs to the radical SAM superfamily. Lipoyl synthase family. The cofactor is [4Fe-4S] cluster.

Its subcellular location is the cytoplasm. It catalyses the reaction [[Fe-S] cluster scaffold protein carrying a second [4Fe-4S](2+) cluster] + N(6)-octanoyl-L-lysyl-[protein] + 2 oxidized [2Fe-2S]-[ferredoxin] + 2 S-adenosyl-L-methionine + 4 H(+) = [[Fe-S] cluster scaffold protein] + N(6)-[(R)-dihydrolipoyl]-L-lysyl-[protein] + 4 Fe(3+) + 2 hydrogen sulfide + 2 5'-deoxyadenosine + 2 L-methionine + 2 reduced [2Fe-2S]-[ferredoxin]. The protein operates within protein modification; protein lipoylation via endogenous pathway; protein N(6)-(lipoyl)lysine from octanoyl-[acyl-carrier-protein]: step 2/2. Functionally, catalyzes the radical-mediated insertion of two sulfur atoms into the C-6 and C-8 positions of the octanoyl moiety bound to the lipoyl domains of lipoate-dependent enzymes, thereby converting the octanoylated domains into lipoylated derivatives. The sequence is that of Lipoyl synthase from Chlorobaculum parvum (strain DSM 263 / NCIMB 8327) (Chlorobium vibrioforme subsp. thiosulfatophilum).